Reading from the N-terminus, the 68-residue chain is DNA-directed RNA polymerase subunit omega (68 aa).

It belongs to the RNA polymerase subunit omega family. In terms of assembly, the RNAP catalytic core consists of 2 alpha, 1 beta, 1 beta' and 1 omega subunit. When a sigma factor is associated with the core the holoenzyme is formed, which can initiate transcription.

The catalysed reaction is RNA(n) + a ribonucleoside 5'-triphosphate = RNA(n+1) + diphosphate. Its function is as follows. Promotes RNA polymerase assembly. Latches the N- and C-terminal regions of the beta' subunit thereby facilitating its interaction with the beta and alpha subunits. This is DNA-directed RNA polymerase subunit omega from Neisseria meningitidis serogroup C (strain 053442).